Consider the following 319-residue polypeptide: Transmembrane and ubiquitin-like domain-containing protein 2 (319 aa).

Residues 36–56 (VMVVAGVVALTLALVLAWLST) form a helical membrane-spanning segment. 2 disordered regions span residues 88–128 (VNQG…ARGE) and 145–165 (RQAG…DGSC). The span at 95-111 (PTEHPHPSGGNDDKAEE) shows a compositional bias: basic and acidic residues. Residues 173 to 246 (INVRLKFLND…IHCHRSPPGA (74 aa)) form the Ubiquitin-like domain. 2 helical membrane passes run 264–284 (LGVN…GVVW) and 298–318 (ATIS…GMYG).

It localises to the membrane. The sequence is that of Transmembrane and ubiquitin-like domain-containing protein 2 (Tmub2) from Mus musculus (Mouse).